The chain runs to 259 residues: Probable metal transport system ATP-binding protein CT_068 (259 aa).

Residues 9–241 (WSVEDLCVNY…AIFQAYGCEL (233 aa)) form the ABC transporter domain. 41-48 (GPNGAGKS) contacts ATP.

The protein belongs to the ABC transporter superfamily.

It localises to the cell inner membrane. Its function is as follows. Part of an ATP-driven transport system CT_067/CT_068/CT_069/CT_070 for a metal. Probably responsible for energy coupling to the transport system. The polypeptide is Probable metal transport system ATP-binding protein CT_068 (Chlamydia trachomatis serovar D (strain ATCC VR-885 / DSM 19411 / UW-3/Cx)).